The chain runs to 21 residues: Dahlein-5.6 (21 aa).

As to expression, expressed by the skin dorsal glands.

It is found in the secreted. Functionally, has no antimicrobial activity. Strongly inhibits the formation of NO by neuronal nitric oxide synthase at micromolar concentrations. The sequence is that of Dahlein-5.6 from Ranoidea dahlii (Dahl's aquatic frog).